The sequence spans 379 residues: Tryptophan 2,3-dioxygenase (379 aa).

Substrate contacts are provided by residues 57-61 and Arg128; that span reads FIITH. His312 contacts heme. Thr327 lines the substrate pocket.

The protein belongs to the tryptophan 2,3-dioxygenase family. In terms of assembly, homotetramer. Dimer of dimers. Heme is required as a cofactor.

The catalysed reaction is L-tryptophan + O2 = N-formyl-L-kynurenine. The protein operates within amino-acid degradation; L-tryptophan degradation via kynurenine pathway; L-kynurenine from L-tryptophan: step 1/2. It participates in pigment biosynthesis; ommochrome biosynthesis. Functionally, heme-dependent dioxygenase that catalyzes the oxidative cleavage of the L-tryptophan (L-Trp) pyrrole ring and converts L-tryptophan to N-formyl-L-kynurenine. Catalyzes the oxidative cleavage of the indole moiety. This Drosophila erecta (Fruit fly) protein is Tryptophan 2,3-dioxygenase.